A 406-amino-acid chain; its full sequence is Argininosuccinate synthase (406 aa).

Residue 8 to 16 participates in ATP binding; sequence AYSGGLDTS. Tyr-86 serves as a coordination point for L-citrulline. Position 116 (Gly-116) interacts with ATP. L-aspartate contacts are provided by Thr-118, Asn-122, and Asp-123. Asn-122 contributes to the L-citrulline binding site. The L-citrulline site is built by Arg-126, Ser-174, Ser-183, Glu-259, and Tyr-271.

This sequence belongs to the argininosuccinate synthase family. Type 1 subfamily. As to quaternary structure, homotetramer.

It is found in the cytoplasm. The catalysed reaction is L-citrulline + L-aspartate + ATP = 2-(N(omega)-L-arginino)succinate + AMP + diphosphate + H(+). The protein operates within amino-acid biosynthesis; L-arginine biosynthesis; L-arginine from L-ornithine and carbamoyl phosphate: step 2/3. The protein is Argininosuccinate synthase of Oenococcus oeni (strain ATCC BAA-331 / PSU-1).